A 521-amino-acid chain; its full sequence is Apolipoprotein N-acyltransferase (521 aa).

The next 5 helical transmembrane spans lie at 24–44 (IKET…FIAL), 71–91 (WLGF…IGYI), 128–148 (IGFL…FNNL), 151–171 (IADI…NSGI), and 182–202 (NLLN…YGMI). The CN hydrolase domain occupies 218 to 472 (LNIAAIQLNT…KGYLLSTVKL (255 aa)). Glu263 acts as the Proton acceptor in catalysis. Residue Lys331 is part of the active site. The active-site Nucleophile is Cys383.

This sequence belongs to the CN hydrolase family. Apolipoprotein N-acyltransferase subfamily.

The protein localises to the cell inner membrane. It catalyses the reaction N-terminal S-1,2-diacyl-sn-glyceryl-L-cysteinyl-[lipoprotein] + a glycerophospholipid = N-acyl-S-1,2-diacyl-sn-glyceryl-L-cysteinyl-[lipoprotein] + a 2-acyl-sn-glycero-3-phospholipid + H(+). It functions in the pathway protein modification; lipoprotein biosynthesis (N-acyl transfer). Functionally, catalyzes the phospholipid dependent N-acylation of the N-terminal cysteine of apolipoprotein, the last step in lipoprotein maturation. The chain is Apolipoprotein N-acyltransferase from Borreliella burgdorferi (strain ATCC 35210 / DSM 4680 / CIP 102532 / B31) (Borrelia burgdorferi).